Consider the following 104-residue polypeptide: Enhancer of rudimentary homolog 1 (104 aa).

The protein belongs to the E(R) family. In terms of assembly, homodimer. Component of the erh1-mmi1 complex. Interacts with mmi1 (via N-terminus) in a 2:2 stoichiometry.

It localises to the nucleus. Its subcellular location is the cytoplasm. Forms part of the erh1-mmi1 complex that recruits the CCR4-NOT complex and the NURS complex to target RNAs. Suppresses the meiotic program during vegetative growth and promotes the meiotic program during mating. Recruitment of the NURS complex to target mRNAs promotes mRNA decay by engagement of the nuclear exosome, and formation of heterochromatin islands at meiotic genes silenced by the exosome. Recruitment of the CCR4-NOT complex to target RNAs promotes heterochromatin formation at RNAi-dependent heterochromatin domains (HOODs), including a subset of meiotic genes, lncRNAs and retrotransposons. Recruitment of the CCR4-NOT complex to rDNA promotes rDNA heterochromatin assembly. The chain is Enhancer of rudimentary homolog 1 from Schizosaccharomyces pombe (strain 972 / ATCC 24843) (Fission yeast).